The primary structure comprises 197 residues: uncharacterized protein (197 aa).

The N-terminal stretch at 1 to 23 (MSARAPKELRLALPPCLLNRTFA) is a signal peptide. Over 24–61 (SPNASGSGNTGARGPGAVGSGTCITQVGQQLFQSFSST) the chain is Extracellular. A glycan (N-linked (GlcNAc...) asparagine) is linked at N26. The helical transmembrane segment at 62 to 82 (LVLIVLVTLIFCLIVLSLSTF) threads the bilayer. Residues 83 to 197 (HIHKRRMKKR…EGLLQTVVLS (115 aa)) are Cytoplasmic-facing. A disordered region spans residues 94–180 (MQRAQEEYER…SSPQGAHAAS (87 aa)). Composition is skewed to basic and acidic residues over residues 96 to 107 (RAQEEYERDHCS) and 125 to 136 (HAKETRLERQPR). The span at 141-161 (CAPSNASSLSSSSPGLPCQGP) shows a compositional bias: low complexity. Positions 162-171 (CAPPPPPPAS) are enriched in pro residues.

It is found in the membrane. This is an uncharacterized protein from Homo sapiens (Human).